The following is a 381-amino-acid chain: Acetylornithine deacetylase (381 aa).

Position 79 (histidine 79) interacts with Zn(2+). Aspartate 81 is a catalytic residue. Aspartate 111 contributes to the Zn(2+) binding site. Glutamate 143 is an active-site residue. Zn(2+)-binding residues include glutamate 144, glutamate 168, and histidine 354.

Belongs to the peptidase M20A family. ArgE subfamily. In terms of assembly, homodimer. Zn(2+) is required as a cofactor. Requires Co(2+) as cofactor. Glutathione serves as cofactor.

It localises to the cytoplasm. The catalysed reaction is N(2)-acetyl-L-ornithine + H2O = L-ornithine + acetate. Its pathway is amino-acid biosynthesis; L-arginine biosynthesis; L-ornithine from N(2)-acetyl-L-ornithine (linear): step 1/1. Functionally, catalyzes the hydrolysis of the amide bond of N(2)-acetylated L-amino acids. Cleaves the acetyl group from N-acetyl-L-ornithine to form L-ornithine, an intermediate in L-arginine biosynthesis pathway, and a branchpoint in the synthesis of polyamines. In Buchnera aphidicola subsp. Schizaphis graminum (strain Sg), this protein is Acetylornithine deacetylase.